Consider the following 298-residue polypeptide: Bifunctional protein FolD (298 aa).

Residues 167–169, Ser192, and Ile233 contribute to the NADP(+) site; that span reads GRS.

Belongs to the tetrahydrofolate dehydrogenase/cyclohydrolase family. As to quaternary structure, homodimer.

The catalysed reaction is (6R)-5,10-methylene-5,6,7,8-tetrahydrofolate + NADP(+) = (6R)-5,10-methenyltetrahydrofolate + NADPH. It carries out the reaction (6R)-5,10-methenyltetrahydrofolate + H2O = (6R)-10-formyltetrahydrofolate + H(+). Its pathway is one-carbon metabolism; tetrahydrofolate interconversion. Catalyzes the oxidation of 5,10-methylenetetrahydrofolate to 5,10-methenyltetrahydrofolate and then the hydrolysis of 5,10-methenyltetrahydrofolate to 10-formyltetrahydrofolate. In Caulobacter sp. (strain K31), this protein is Bifunctional protein FolD.